The following is a 523-amino-acid chain: Cytochrome P450 monooxygenase ple1 (523 aa).

A helical membrane pass occupies residues 9-29 (ALPVLAIWAAIGLAYWIDSQK). N-linked (GlcNAc...) asparagine glycosylation occurs at Asn-141. Cys-444 is a heme binding site.

This sequence belongs to the cytochrome P450 family. Heme serves as cofactor.

The protein resides in the membrane. It participates in secondary metabolite biosynthesis; terpenoid biosynthesis. Cytochrome P450 monooxygenase; part of the gene cluster that mediates the biosynthesis of pleuromutilin, a tricyclic diterpene showing antibacterial properties. The geranylgeranyl diphosphate (GGPP) synthase ple4 catalyzes the first step in pleuromutilin biosynthesis. GGPP is then substrate of the premutilin synthase (PS) ple3 to yield premutilin. Premutilin synthase is a bifunctional enzyme composed of the fusion of a class II diterpene cyclase (DTC) and a class I diterpene synthase (DTS), with the corresponding domains and active sites containing characteristic aspartate-rich motifs. GGPP is first converted to mutildienyl-diphosphate (MPP) at the class II DTC site. MPP is subsequently further cyclized at the class I DTS site, followed by a 1,5-hydride shift and addition of water prior to terminating deprotonation, to yield premutilin. The cytochrome P450 monooxygenases ple5 and ple6 hydroxylate premutilin at C-11 and C-3, respectively, producing 11-hydroxypremutilin and 3-hydroxypremutilin. The combination of the actions of both ple5 and ple6 leads to the production of 3,11-dihydroxypremutilin. The short chain dehydrogenase ple7 further converts 3,11-dihydroxypremutilin into mutilin. The acetyltransferase ple2 then acetylates mutilin to produce 14-O-acetylmutilin. Finally, the cytochrome P450 monooxygenase ple1 catalyzes hydroxylation on the alpha position of the acetyl side chain of 14-O-acetylmutilin to yield pleuromutilin. The chain is Cytochrome P450 monooxygenase ple1 from Rhodocybe pseudopiperita (Clitopilus pseudopiperitus).